The primary structure comprises 503 residues: Glucosaminyl-phosphatidylinositol-acyltransferase PIGW (503 aa).

Over 1 to 21 the chain is Lumenal; that stretch reads MSQKQLKEAFVRNLSGTSVLE. An N-linked (GlcNAc...) asparagine glycan is attached at Asn13. Residues 22–42 form a helical membrane-spanning segment; it reads VTQGLCFPAFCILCRGLWIIF. At 43-48 the chain is on the cytoplasmic side; that stretch reads SQHVCS. A helical transmembrane segment spans residues 49 to 71; sequence FSNTWSTRFLMDFVVLIVPLVIT. Over 72-74 the chain is Lumenal; the sequence is LTV. Residues 75 to 97 traverse the membrane as a helical segment; it reads LSSFILLENLTVIVWGAWLLYQI. Residues 98–131 lie on the Cytoplasmic side of the membrane; that stretch reads YHRRTCYAKVPVQKVFANFLKISLESEYNPAITC. A helical membrane pass occupies residues 132 to 152; the sequence is YRVINSVFTAIAILAVDFPLF. At 153–160 the chain is on the lumenal side; it reads PRRFAKTE. Residues 161–181 form a helical membrane-spanning segment; that stretch reads LYGTGAMDFGVGGFIFGAAMV. Topologically, residues 182–201 are cytoplasmic; sequence CPEVRRKSIEESRFNYLRKS. The helical transmembrane segment at 202–222 threads the bilayer; the sequence is LYSVWPLVFLGMGRLVIIKSI. Topologically, residues 223 to 236 are lumenal; that stretch reads GYQEHSTEYGIHWN. The chain crosses the membrane as a helical span at residues 237-257; the sequence is FFFTIIVVRLVTSLLLIIFPL. Over 258–259 the chain is Cytoplasmic; sequence NK. Residues 260-280 traverse the membrane as a helical segment; that stretch reads SWIVAVSITVVYQLALDYTPL. Residues 281 to 304 lie on the Lumenal side of the membrane; it reads KRILLYGTDGSGTRVGFLNANREG. A helical transmembrane segment spans residues 305 to 325; that stretch reads IISTLGYVTIHMAGVQTGLYV. At 326–339 the chain is on the cytoplasmic side; sequence LKGRAQVRDWIKAT. Residues 340 to 360 form a helical membrane-spanning segment; the sequence is CWVFSVAVGFFISLHIVQVNI. Residues 361–380 are Lumenal-facing; sequence EAVSRRMANLAFCLWVVASS. A helical membrane pass occupies residues 381–401; the sequence is LMLLSCLLLSGIILSFAQFLI. Over 402 to 447 the chain is Cytoplasmic; sequence KGSLVPCSWKLIQSPTTHKNHSESLILEAEKNQPSLCLITALNRNQ. A Phosphoserine modification is found at Ser415. Residues 448-468 traverse the membrane as a helical segment; the sequence is LFFFLLSNITTGLINLTMDTL. Residues 469-472 are Lumenal-facing; that stretch reads HTGA. The helical transmembrane segment at 473 to 493 threads the bilayer; sequence LWTLVVLSIYMFTNCLVIYVL. The Cytoplasmic segment spans residues 494–503; the sequence is DLQGKTIKFW.

It belongs to the PIGW family.

It is found in the endoplasmic reticulum membrane. It functions in the pathway glycolipid biosynthesis; glycosylphosphatidylinositol-anchor biosynthesis. Its function is as follows. Acyltransferase that catalyzes the acyl transfer from an acyl-CoA at the 2-OH position of the inositol ring of glucosaminyl phosphatidylinositol (GlcN-PI) to generate GlcN-(acyl)PI and participates in the fourth step of GPI-anchor biosynthesi. Required for the transport of GPI-anchored proteins to the plasma membrane. Acetylation during GPI-anchor biosynthesis is not essential for the subsequent mannosylation and is usually removed soon after the attachment of GPIs to proteins. In Mus musculus (Mouse), this protein is Glucosaminyl-phosphatidylinositol-acyltransferase PIGW.